We begin with the raw amino-acid sequence, 186 residues long: Putative manganese efflux pump MntP (186 aa).

A run of 6 helical transmembrane segments spans residues Met1–Ser21, Val41–Val61, Trp71–Gly91, Leu105–Phe125, Ile130–Val150, and Ile165–Trp185.

The protein belongs to the MntP (TC 9.B.29) family.

It localises to the cell membrane. Its function is as follows. Probably functions as a manganese efflux pump. The polypeptide is Putative manganese efflux pump MntP (Methanosarcina barkeri (strain Fusaro / DSM 804)).